Consider the following 391-residue polypeptide: Lipid-A-disaccharide synthase (391 aa).

This sequence belongs to the LpxB family.

It catalyses the reaction a lipid X + a UDP-2-N,3-O-bis[(3R)-3-hydroxyacyl]-alpha-D-glucosamine = a lipid A disaccharide + UDP + H(+). It participates in bacterial outer membrane biogenesis; LPS lipid A biosynthesis. In terms of biological role, condensation of UDP-2,3-diacylglucosamine and 2,3-diacylglucosamine-1-phosphate to form lipid A disaccharide, a precursor of lipid A, a phosphorylated glycolipid that anchors the lipopolysaccharide to the outer membrane of the cell. This chain is Lipid-A-disaccharide synthase, found in Rickettsia akari (strain Hartford).